Here is a 217-residue protein sequence, read N- to C-terminus: Pyridoxine/pyridoxamine 5'-phosphate oxidase (217 aa).

Substrate-binding positions include 14–17 (RKSY) and K72. FMN is bound by residues 67–72 (RVVLIK), 82–83 (YT), R88, and K89. Residues Y129, R133, and S137 each coordinate substrate. Residues 146–147 (QS) and W190 each bind FMN. A substrate-binding site is contributed by 196–198 (RLH). An FMN-binding site is contributed by R200.

The protein belongs to the pyridoxamine 5'-phosphate oxidase family. As to quaternary structure, homodimer. The cofactor is FMN.

It carries out the reaction pyridoxamine 5'-phosphate + O2 + H2O = pyridoxal 5'-phosphate + H2O2 + NH4(+). The enzyme catalyses pyridoxine 5'-phosphate + O2 = pyridoxal 5'-phosphate + H2O2. It functions in the pathway cofactor metabolism; pyridoxal 5'-phosphate salvage; pyridoxal 5'-phosphate from pyridoxamine 5'-phosphate: step 1/1. The protein operates within cofactor metabolism; pyridoxal 5'-phosphate salvage; pyridoxal 5'-phosphate from pyridoxine 5'-phosphate: step 1/1. Functionally, catalyzes the oxidation of either pyridoxine 5'-phosphate (PNP) or pyridoxamine 5'-phosphate (PMP) into pyridoxal 5'-phosphate (PLP). This is Pyridoxine/pyridoxamine 5'-phosphate oxidase from Acidovorax sp. (strain JS42).